The sequence spans 794 residues: Phenylalanine--tRNA ligase beta subunit (794 aa).

Positions S39 to C154 constitute a tRNA-binding domain. The region spanning P403–A481 is the B5 domain. Residues D457, D463, E466, and E467 each coordinate Mg(2+). Residues P697–D793 enclose the FDX-ACB domain.

It belongs to the phenylalanyl-tRNA synthetase beta subunit family. Type 1 subfamily. Tetramer of two alpha and two beta subunits. It depends on Mg(2+) as a cofactor.

The protein localises to the cytoplasm. It catalyses the reaction tRNA(Phe) + L-phenylalanine + ATP = L-phenylalanyl-tRNA(Phe) + AMP + diphosphate + H(+). The polypeptide is Phenylalanine--tRNA ligase beta subunit (Chlamydia abortus (strain DSM 27085 / S26/3) (Chlamydophila abortus)).